Here is a 237-residue protein sequence, read N- to C-terminus: Cyclic-di-GMP-binding biofilm dispersal mediator protein (237 aa).

10 to 34 (LILGGSRGIGAAIVRRFVTDGANVR) is a binding site for NAD(+). S132 provides a ligand contact to substrate. Residue Y146 is the Proton acceptor of the active site.

It belongs to the short-chain dehydrogenases/reductases (SDR) family.

In terms of biological role, increases biofilm dispersal. Acts by binding directly to the signaling molecule cyclic-di-GMP, which decreases the intracellular concentration of cyclic-di-GMP and leads to biofilm dispersal. Also controls other biofilm-related phenotypes such as cell motility, cell size, cell aggregation and production of extracellular DNA and extracellular polysaccharides (EPS). Does not act as a phosphodiesterase. The polypeptide is Cyclic-di-GMP-binding biofilm dispersal mediator protein (bdcA) (Escherichia coli (strain K12)).